The primary structure comprises 76 residues: Cytochrome c oxidase subunit 6C (76 aa).

Residues 4–22 are Mitochondrial matrix-facing; the sequence is GALLPKPQMRGLLAKRLRV. A helical membrane pass occupies residues 23–44; it reads HIAGAFIVALGVAAAYKFGVAE. Over 45-76 the chain is Mitochondrial intermembrane; it reads PRKKAYAEFYRNYDSMKDFEEMRKAGIFQSAK.

This sequence belongs to the cytochrome c oxidase subunit 6c family. In terms of assembly, component of the cytochrome c oxidase (complex IV, CIV), a multisubunit enzyme composed of 14 subunits. The complex is composed of a catalytic core of 3 subunits MT-CO1, MT-CO2 and MT-CO3, encoded in the mitochondrial DNA, and 11 supernumerary subunits COX4I, COX5A, COX5B, COX6A, COX6B, COX6C, COX7A, COX7B, COX7C, COX8 and NDUFA4, which are encoded in the nuclear genome. The complex exists as a monomer or a dimer and forms supercomplexes (SCs) in the inner mitochondrial membrane with NADH-ubiquinone oxidoreductase (complex I, CI) and ubiquinol-cytochrome c oxidoreductase (cytochrome b-c1 complex, complex III, CIII), resulting in different assemblies (supercomplex SCI(1)III(2)IV(1) and megacomplex MCI(2)III(2)IV(2)). Post-translationally, acetylation of Lys-61 is observed in liver mitochondria from fasted mice but not from fed mice.

It localises to the mitochondrion inner membrane. Its pathway is energy metabolism; oxidative phosphorylation. Its function is as follows. Component of the cytochrome c oxidase, the last enzyme in the mitochondrial electron transport chain which drives oxidative phosphorylation. The respiratory chain contains 3 multisubunit complexes succinate dehydrogenase (complex II, CII), ubiquinol-cytochrome c oxidoreductase (cytochrome b-c1 complex, complex III, CIII) and cytochrome c oxidase (complex IV, CIV), that cooperate to transfer electrons derived from NADH and succinate to molecular oxygen, creating an electrochemical gradient over the inner membrane that drives transmembrane transport and the ATP synthase. Cytochrome c oxidase is the component of the respiratory chain that catalyzes the reduction of oxygen to water. Electrons originating from reduced cytochrome c in the intermembrane space (IMS) are transferred via the dinuclear copper A center (CU(A)) of subunit 2 and heme A of subunit 1 to the active site in subunit 1, a binuclear center (BNC) formed by heme A3 and copper B (CU(B)). The BNC reduces molecular oxygen to 2 water molecules using 4 electrons from cytochrome c in the IMS and 4 protons from the mitochondrial matrix. This is Cytochrome c oxidase subunit 6C (Cox6c) from Mus musculus (Mouse).